The sequence spans 561 residues: Zinc finger protein with KRAB and SCAN domains 1 (561 aa).

A disordered region spans residues methionine 1 to aspartate 51. At serine 13 the chain carries Phosphoserine. Lysine 27 participates in a covalent cross-link: Glycyl lysine isopeptide (Lys-Gly) (interchain with G-Cter in SUMO2). The SCAN box domain maps to arginine 56–leucine 138. A disordered region spans residues valine 163–arginine 187. Over residues histidine 178 to arginine 187 the composition is skewed to basic residues. Residues lysine 180 and lysine 226 each participate in a glycyl lysine isopeptide (Lys-Gly) (interchain with G-Cter in SUMO2) cross-link. Residues valine 225 to glutamine 304 form the KRAB domain. The span at asparagine 260–threonine 275 shows a compositional bias: polar residues. The segment at asparagine 260–alanine 372 is disordered. Basic and acidic residues-rich tracts occupy residues serine 276–serine 286 and phenylalanine 294–lysine 349. Residues lysine 277, lysine 296, lysine 301, and lysine 336 each participate in a glycyl lysine isopeptide (Lys-Gly) (interchain with G-Cter in SUMO2) cross-link. Polar residues predominate over residues phenylalanine 355–proline 365. Lysine 373 participates in a covalent cross-link: Glycyl lysine isopeptide (Lys-Gly) (interchain with G-Cter in SUMO2). 6 consecutive C2H2-type zinc fingers follow at residues histidine 375 to histidine 397, tyrosine 403 to histidine 425, histidine 431 to histidine 453, tyrosine 459 to histidine 481, tyrosine 487 to histidine 509, and tyrosine 515 to histidine 537. Residues lysine 410, lysine 438, and lysine 476 each participate in a glycyl lysine isopeptide (Lys-Gly) (interchain with G-Cter in SUMO2) cross-link. Residue lysine 558 forms a Glycyl lysine isopeptide (Lys-Gly) (interchain with G-Cter in SUMO2) linkage.

This sequence belongs to the krueppel C2H2-type zinc-finger protein family.

The protein resides in the nucleus. Functionally, may be involved in transcriptional regulation. The chain is Zinc finger protein with KRAB and SCAN domains 1 (Zkscan1) from Mus musculus (Mouse).